A 138-amino-acid chain; its full sequence is Iron sulfur cluster assembly protein 1 (138 aa).

The protein belongs to the NifU family. As to quaternary structure, component of the core Fe-S cluster (ISC) assembly machinery. [2Fe-2S] cluster is required as a cofactor.

The protein localises to the cytoplasm. Its pathway is cofactor biosynthesis; iron-sulfur cluster biosynthesis. In terms of biological role, scaffold protein for the de novo synthesis of iron-sulfur (Fe-S) clusters within mitosomes, which is required for maturation of both [2Fe-2S] and [4Fe-4S] proteins. First, a [2Fe-2S] cluster is transiently assembled on the scaffold protein ISU1. In a second step, the cluster is released from ISU1, transferred to a glutaredoxin, followed by the formation of [2Fe-2S] proteins, the synthesis of [4Fe-4S] clusters and their target-specific insertion into the recipient apoproteins. Cluster assembly on ISU1 depends on the function of the cysteine desulfurase complex NFS1-ISD11, which serves as the sulfur donor for cluster synthesis, the iron-binding protein frataxin as the putative iron donor, and the electron transfer chain comprised of ferredoxin reductase and ferredoxin, which receive their electrons from NADH. The polypeptide is Iron sulfur cluster assembly protein 1 (ISU1) (Trachipleistophora hominis (Microsporidian parasite)).